A 129-amino-acid polypeptide reads, in one-letter code: Phosphoribosyl-AMP cyclohydrolase (129 aa).

Asp-85 lines the Mg(2+) pocket. Cys-86 is a binding site for Zn(2+). Positions 87 and 89 each coordinate Mg(2+). Zn(2+) is bound by residues Cys-102 and Cys-109.

Belongs to the PRA-CH family. Homodimer. Mg(2+) is required as a cofactor. The cofactor is Zn(2+).

The protein resides in the cytoplasm. It catalyses the reaction 1-(5-phospho-beta-D-ribosyl)-5'-AMP + H2O = 1-(5-phospho-beta-D-ribosyl)-5-[(5-phospho-beta-D-ribosylamino)methylideneamino]imidazole-4-carboxamide. The protein operates within amino-acid biosynthesis; L-histidine biosynthesis; L-histidine from 5-phospho-alpha-D-ribose 1-diphosphate: step 3/9. Functionally, catalyzes the hydrolysis of the adenine ring of phosphoribosyl-AMP. The protein is Phosphoribosyl-AMP cyclohydrolase (hisI) of Methanococcus maripaludis (strain DSM 14266 / JCM 13030 / NBRC 101832 / S2 / LL).